The following is a 542-amino-acid chain: Putative ankyrin repeat protein FPV115 (542 aa).

8 ANK repeats span residues phenylalanine 33 to serine 62, aspartate 157 to leucine 186, asparagine 218 to threonine 247, lysine 251 to valine 281, glutamate 285 to valine 314, threonine 316 to threonine 345, aspartate 347 to serine 375, and cysteine 378 to alanine 407.

This is Putative ankyrin repeat protein FPV115 from Fowlpox virus (strain NVSL) (FPV).